Here is a 342-residue protein sequence, read N- to C-terminus: Nuclear hormone receptor family member nhr-150 (342 aa).

Positions 1–71 (MCQVCGAAEA…AGMTSKKIQS (71 aa)) form a DNA-binding region, nuclear receptor. Residues 2 to 22 (CQVCGAAEADLHFGGISCRAC) form an NR C4-type zinc finger. The NR C4-type; degenerate zinc finger occupies 39–54 (CTCKTRILDSHPCRSC). The 248-residue stretch at 94–341 (SARIIPRSSL…GFMEIIRESK (248 aa)) folds into the NR LBD domain.

It belongs to the nuclear hormone receptor family.

Its subcellular location is the nucleus. Functionally, orphan nuclear receptor. This chain is Nuclear hormone receptor family member nhr-150 (nhr-150), found in Caenorhabditis elegans.